Here is a 146-residue protein sequence, read N- to C-terminus: Flavodoxin (146 aa).

One can recognise a Flavodoxin-like domain in the interval 4 to 143 (SLIVYGSTTG…EIVSWGSGIA (140 aa)).

This sequence belongs to the flavodoxin family. It depends on FMN as a cofactor.

Functionally, low-potential electron donor to a number of redox enzymes. The sequence is that of Flavodoxin from Maridesulfovibrio salexigens (strain ATCC 14822 / DSM 2638 / NCIMB 8403 / VKM B-1763) (Desulfovibrio salexigens).